Here is a 150-residue protein sequence, read N- to C-terminus: 3-hydroxyacyl-[acyl-carrier-protein] dehydratase FabZ (150 aa).

His-51 is a catalytic residue.

This sequence belongs to the thioester dehydratase family. FabZ subfamily.

Its subcellular location is the cytoplasm. The enzyme catalyses a (3R)-hydroxyacyl-[ACP] = a (2E)-enoyl-[ACP] + H2O. Functionally, involved in unsaturated fatty acids biosynthesis. Catalyzes the dehydration of short chain beta-hydroxyacyl-ACPs and long chain saturated and unsaturated beta-hydroxyacyl-ACPs. The polypeptide is 3-hydroxyacyl-[acyl-carrier-protein] dehydratase FabZ (Legionella pneumophila (strain Lens)).